Reading from the N-terminus, the 294-residue chain is Homeobox protein HD1 (294 aa).

The region spanning 197 to 217 is the ELK domain; that stretch reads ELKLELKQGFKSRIEDVREEI. The homeobox; TALE-type DNA-binding region spans 218–281; the sequence is MRKRRAGKLP…NQRKRNWHNN (64 aa).

Belongs to the TALE/KNOX homeobox family. As to expression, in roots, stems and cotyledons of one-week old seedlings. In mature plants, in young leaves from first level below flowers as well as in flower buds and open flowers.

The protein localises to the nucleus. In terms of biological role, possible developmental regulator. This chain is Homeobox protein HD1 (HD1), found in Brassica napus (Rape).